We begin with the raw amino-acid sequence, 381 residues long: Sulfite reductase, dissimilatory-type subunit beta (381 aa).

[4Fe-4S] cluster is bound by residues Cys-151, Cys-188, Cys-189, Cys-193, Cys-231, Cys-258, Cys-261, and Cys-264. Cys-193 provides a ligand contact to siroheme. The 28-residue stretch at 249–276 (NTIAIKNERCMYCGNCYTMCPALPISDG) folds into the 4Fe-4S ferredoxin-type domain.

In terms of assembly, heterohexamer of two alpha, two beta and two gamma subunits. The cofactor is [4Fe-4S] cluster. Requires siroheme as cofactor.

The catalysed reaction is [DsrC protein]-trisulfide + NAD(+) + 3 H2O = [DsrC protein]-dithiol + sulfite + NADH + 3 H(+). Its function is as follows. Catalyzes the reduction of sulfite to sulfide. This is the terminal oxidation reaction in sulfate respiration, a process catalyzed by the sulfate-reducing bacteria. This Nitratidesulfovibrio vulgaris (strain ATCC 29579 / DSM 644 / CCUG 34227 / NCIMB 8303 / VKM B-1760 / Hildenborough) (Desulfovibrio vulgaris) protein is Sulfite reductase, dissimilatory-type subunit beta (dsvB).